Consider the following 391-residue polypeptide: Acetylgalactosaminyl-O-glycosyl-glycoprotein beta-1,3-N-acetylglucosaminyltransferase (391 aa).

Over 1-11 (MALPSSRRFKS) the chain is Cytoplasmic. A helical; Signal-anchor for type II membrane protein transmembrane segment spans residues 12–32 (PTTLAFFLVGVTLVVLNQWFL). Over 33-391 (QEHRQEKAKG…TAGEQNPDAH (359 aa)) the chain is Lumenal. Residues N68 and N191 are each glycosylated (N-linked (GlcNAc...) asparagine).

It belongs to the glycosyltransferase 31 family.

Its subcellular location is the golgi apparatus membrane. The catalysed reaction is a 3-O-[N-acetyl-alpha-D-galactosaminyl]-L-threonyl-[protein] + UDP-N-acetyl-alpha-D-glucosamine = a 3-O-[N-acetyl-beta-D-glucosaminyl-(1-&gt;3)-N-acetyl-alpha-D-galactosaminyl]-L-threonyl-[protein] + UDP + H(+). The enzyme catalyses a 3-O-[N-acetyl-alpha-D-galactosaminyl]-L-seryl-[protein] + UDP-N-acetyl-alpha-D-glucosamine = 3-O-[N-acetyl-beta-D-glucosaminyl-(1-&gt;3)-N-acetyl-alpha-D-galactosaminyl]-L-seryl-[protein] + UDP + H(+). It participates in protein modification; protein glycosylation. Beta-1,3-N-acetylglucosaminyltransferase that synthesizes the core 3 structure of the O-glycan, an important precursor in the biosynthesis of mucin-type glycoproteins. Plays an important role in the synthesis of mucin-type O-glycans in digestive organs. The polypeptide is Acetylgalactosaminyl-O-glycosyl-glycoprotein beta-1,3-N-acetylglucosaminyltransferase (B3gnt6) (Mus musculus (Mouse)).